A 520-amino-acid polypeptide reads, in one-letter code: DDB1- and CUL4-associated factor 17 (520 aa).

The next 2 membrane-spanning stretches (helical) occupy residues 186–206 (VLLY…ILEI) and 222–242 (GILI…QTIA).

As to quaternary structure, interacts with DDB1, CUL4A and CUL4B. Ubiquitously expressed.

The protein resides in the membrane. The protein localises to the nucleus. It is found in the nucleolus. It functions in the pathway protein modification; protein ubiquitination. Functionally, may function as a substrate receptor for CUL4-DDB1 E3 ubiquitin-protein ligase complex. The polypeptide is DDB1- and CUL4-associated factor 17 (DCAF17) (Homo sapiens (Human)).